Consider the following 344-residue polypeptide: MLDKIKELTQTIEDFSIESKEQLEQFRLEYLSKKGKITSMFDGFDFKTVAPEIKKSMGQEMNKLKVLAQTKFEELQDKLNTGSNDNSVYQKIDTSLPVIPNELGGRHPINIVREQIYTVFERMGFNLSDGPEIEDDFHNFTALNFPENHPAREMQDTFFIERNPDIVLRTHTSSVQVRVMENQKPPIRTISPGRVYRNEAISARAHCMFHQIEGLYVDKNVSFADLKNTLYHFSKEMFGKDTQIRFRPSFFPFTEPSAEMDISCFICNGKGCNICKQSGWVEIGGAGMLDPNVLINAKIDPKVYSGFAFGMGIERITMLKYQIKDLRLFTENDVRFLRQFKHAE.

Residue Glu-255 participates in Mg(2+) binding.

The protein belongs to the class-II aminoacyl-tRNA synthetase family. Phe-tRNA synthetase alpha subunit type 1 subfamily. In terms of assembly, tetramer of two alpha and two beta subunits. Mg(2+) serves as cofactor.

It is found in the cytoplasm. The catalysed reaction is tRNA(Phe) + L-phenylalanine + ATP = L-phenylalanyl-tRNA(Phe) + AMP + diphosphate + H(+). The polypeptide is Phenylalanine--tRNA ligase alpha subunit (Cytophaga hutchinsonii (strain ATCC 33406 / DSM 1761 / CIP 103989 / NBRC 15051 / NCIMB 9469 / D465)).